A 586-amino-acid chain; its full sequence is Alpha-1,2-mannosyltransferase MNN5 (586 aa).

An N-terminal signal peptide occupies residues 1 to 29 (MLIRLKKRKILQVIVSAVVLILFFCSVHN). Asn113, Asn136, Asn259, and Asn264 each carry an N-linked (GlcNAc...) asparagine glycan.

The protein belongs to the MNN1/MNT family. Interacts with SVP26. Glycosylated.

It localises to the golgi apparatus. The protein localises to the cis-Golgi network. It functions in the pathway protein modification; protein glycosylation. In terms of biological role, responsible for addition of first and second mannose residues to the outer chain of core N-linked polysaccharides and to O-linked mannotriose. Implicated in late Golgi modifications. The sequence is that of Alpha-1,2-mannosyltransferase MNN5 (MNN5) from Saccharomyces cerevisiae (strain ATCC 204508 / S288c) (Baker's yeast).